The chain runs to 2344 residues: Genome polyprotein (2344 aa).

The SF3 helicase domain occupies 492–653; sequence QKVISDLHTM…ESWQATRHGS (162 aa). 522–529 is a binding site for ATP; that stretch reads GAPGIGKT. The residue at position 1014 (Tyr1014) is an O-(5'-phospho-RNA)-tyrosine. Tyr1014 is modified (O-UMP-tyrosine; transient). A Peptidase C24 domain is found at 1109-1244; the sequence is GLPGFMRHNG…SKMCTLIDLT (136 aa). Active-site for 3CLpro activity residues include His1135, Asp1152, and Cys1212. The RdRp catalytic domain occupies 1495–1619; sequence SDFLCLDYSK…AMTPMMVSLL (125 aa). A disulfide bridge links Cys1584 with Cys1591. The disordered stretch occupies residues 1771–1794; sequence RTAPQGEAAGTATTASVPGTTTDG. Positions 1778 to 1794 are enriched in low complexity; it reads AAGTATTASVPGTTTDG.

In terms of assembly, homodimer. Homomultimer. Interacts with host type II histo-blood group structures antigens at the surface of target cells. Mn(2+) serves as cofactor. In terms of processing, specific enzymatic cleavages by its own cysteine protease yield mature proteins. The protease cleaves itself from the nascent polyprotein autocatalytically. Precursor p41 can be cleaved by viral 3CLpro into protein p19 and VPg, or cleaved by host protease into protein p23/2 and protein p18. VPg is uridylylated by the polymerase and is covalently attached to the 5'-end of the polyadenylated genomic and subgenomic RNAs. This uridylylated form acts as a nucleotide-peptide primer for the polymerase.

The protein resides in the host cytoplasm. The protein localises to the host endoplasmic reticulum. It is found in the virion. It carries out the reaction a ribonucleoside 5'-triphosphate + H2O = a ribonucleoside 5'-diphosphate + phosphate + H(+). It catalyses the reaction Endopeptidase with a preference for cleavage when the P1 position is occupied by Glu-|-Xaa and the P1' position is occupied by Gly-|-Yaa.. The catalysed reaction is RNA(n) + a ribonucleoside 5'-triphosphate = RNA(n+1) + diphosphate. Functionally, together with NTPase and NS4, initiates the formation of the replication complex. Induces the proliferation of the host smooth ER membranes forming long tubular structures. These remodeled membranes probably form the viral factories that contain the replication complex. In terms of biological role, displays NTPase activity, but no helicase activity. Induces the formation of convoluted membranes derived from the host ER. These remodeled membranes probably form the viral factories that contain the replication complex. Together with NS2 and NS4, initiates the formation of the replication complex. Its function is as follows. Probable key protein responsible for the formation of membrane alterations by the virus. Induces the formation of convoluted membranes derived from the host ER. These remodeled membranes probably form the viral factories that contain the replication complex. Together with NS2 and NTPase, initiates the formation of the replication complex. Viral genome-linked protein is covalently linked to the 5'-end of the positive-strand, negative-strand genomic RNAs and subgenomic RNA. Acts as a genome-linked replication primer. May recruit ribosome to viral RNA thereby promoting viral proteins translation. Interacts with host translation initiation complex to allow the translation of viral proteins. Functionally, processes the polyprotein. 3CLpro-RdRp is first released by autocleavage, then all other proteins are cleaved. May cleave polyadenylate-binding protein thereby inhibiting cellular translation. In terms of biological role, replicates genomic and antigenomic RNA by recognizing replications specific signals. Also transcribes a subgenomic mRNA by initiating RNA synthesis internally on antigenomic RNA. This sgRNA codes for structural proteins. Catalyzes the covalent attachment VPg with viral RNAs. Its function is as follows. Capsid protein VP60 self assembles to form an icosahedral capsid with a T=3 symmetry, about 35 nm in diameter, and consisting of 180 capsid proteins. A smaller form of capsid with a diameter of 23 nm might be capsid proteins assembled as icosahedron with T=1 symmetry. The capsid encapsulate VP2 proteins and genomic or subgenomic RNA. Attaches virion to target cells by binding histo-blood group antigens, inducing endocytosis of the viral particle. Acidification of the endosome induces conformational change of capsid protein thereby injecting virus genomic RNA into host cytoplasm. The polypeptide is Genome polyprotein (Oryctolagus cuniculus (Rabbit)).